Here is a 162-residue protein sequence, read N- to C-terminus: Caveolin-2 (162 aa).

Over 1-86 (MGLETEKADV…FEISKYVVYK (86 aa)) the chain is Cytoplasmic. At Y19 the chain carries Phosphotyrosine; by SRC. 2 positions are modified to phosphoserine: S20 and S23. Residue Y27 is modified to Phosphotyrosine; by SRC. Residue S36 is modified to Phosphoserine. An intramembrane region (helical) is located at residues 87 to 107 (FLTVFLAIPLAFAAGILFATL). The Cytoplasmic segment spans residues 108-162 (SCLHIWIIMPFVKTCLMVLPSVQTVWKTVTDVVIAPLCASVGRSFSSVSLQLSHD).

It belongs to the caveolin family. Monomer or homodimer. Interacts with CAV1; the interaction forms a stable heterooligomeric complex that is required for targeting to lipid rafts and for caveolae formation. Tyrosine phosphorylated forms do not form heterooligomers with the Tyr-19-phosphorylated form existing as a monomer or dimer, and the Tyr-27-form as a monomer only. Interacts (tyrosine phosphorylated form) with the SH2 domain-containing proteins, RASA1, NCK1 and SRC. Interacts (tyrosine phosphorylated form) with INSR, the interaction (Tyr-27-phosphorylated form) is increased on insulin stimulation. Interacts (Tyr-19 phosphorylated form) with MAPK1 (phosphorylated form); the interaction, promoted by insulin, leads to nuclear location and MAPK1 activation. Interacts with STAT3; the interaction is increased on insulin-induced tyrosine phosphorylation leading to STAT activation. Phosphorylated on serine and tyrosine residues. CAV1 promotes phosphorylation on Ser-23 which then targets the complex to the plasma membrane, lipid rafts and caveolae. Phosphorylation on Ser-36 appears to modulate mitosis in endothelial cells. Phosphorylation on both Tyr-19 and Tyr-27 is required for insulin-induced 'Ser-727' phosphorylation of STAT3 and its activation. Phosphorylation on Tyr-19 is required for insulin-induced phosphorylation of MAPK1 and DNA binding of STAT3. Tyrosine phosphorylation is induced by both EGF and insulin (By. similarity).

It localises to the nucleus. The protein resides in the cytoplasm. It is found in the golgi apparatus membrane. Its subcellular location is the cell membrane. The protein localises to the membrane. It localises to the caveola. Its function is as follows. May act as a scaffolding protein within caveolar membranes. Interacts directly with G-protein alpha subunits and can functionally regulate their activity. Acts as an accessory protein in conjunction with CAV1 in targeting to lipid rafts and driving caveolae formation. The Ser-36 phosphorylated form has a role in modulating mitosis in endothelial cells. Positive regulator of cellular mitogenesis of the MAPK signaling pathway. Required for the insulin-stimulated nuclear translocation and activation of MAPK1 and STAT3, and the subsequent regulation of cell cycle progression. In Loxodonta africana (African elephant), this protein is Caveolin-2 (CAV2).